Here is a 177-residue protein sequence, read N- to C-terminus: MVLAALIREEIPIPDGVDVTIDGGVTVKGPKWELSRKFNHSEISMAVEDDKVVLEVKFPKKKDKAMIGTVRAHISNMITGVTEGFRYRMKIVYAHFPMSVKVAGDKVVIENFLGERHPRTARFVGDTKVQVKGDEVEITGINKEHVGQTMANIEQATKIKGRDPRVFQDGIYLVSKE.

This sequence belongs to the universal ribosomal protein uL6 family. In terms of assembly, part of the 50S ribosomal subunit.

Its function is as follows. This protein binds to the 23S rRNA, and is important in its secondary structure. It is located near the subunit interface in the base of the L7/L12 stalk, and near the tRNA binding site of the peptidyltransferase center. In Methanothermobacter thermautotrophicus (strain ATCC 29096 / DSM 1053 / JCM 10044 / NBRC 100330 / Delta H) (Methanobacterium thermoautotrophicum), this protein is Large ribosomal subunit protein uL6.